A 354-amino-acid polypeptide reads, in one-letter code: MTIFNGLSESGESKKLNSKIEKQIENASKKDKKIYKVLLLGASDSGKSTISKQIKILNKNGFSQEEIMTFIPVIRRNLLESAKTLVKIIVQKGINLDPLGTHNCEIIEKFNPTPGELINANIGQAITSLWSANSVRSCTYGNDSVLIDSAPYFFSRADEICSRHYVPTIDDILRSRNSTLGISEISFTLDHLQIRMFDVGGQRTERRKWIYCFENVNSIIFCVSLNDYDKKLYERAAPERNRLVESISLFDSIINSQWFMHSSIILFLNKFDLFRKKLEHVPFQDYFPQYEGKNSVKSITRYILWLFVNPSINRAKHNIYPHITTAVDTSNIKVVFSAVKETILQHSLKEAGMF.

In terms of domain architecture, G-alpha spans 33–354; that stretch reads KIYKVLLLGA…QHSLKEAGMF (322 aa). Residues 36–49 are G1 motif; that stretch reads KVLLLGASDSGKST. GTP contacts are provided by aspartate 44, serine 45, glycine 46, lysine 47, serine 48, threonine 49, aspartate 148, leucine 173, threonine 179, glycine 201, asparagine 269, lysine 270, aspartate 272, and alanine 326. Serine 48 is a binding site for Mg(2+). Positions 171 to 179 are G2 motif; it reads DILRSRNST. Threonine 179 serves as a coordination point for Mg(2+). A G3 motif region spans residues 194–203; sequence IRMFDVGGQR. Residues 265–272 are G4 motif; that stretch reads ILFLNKFD. The segment at 324 to 329 is G5 motif; the sequence is TTAVDT.

This sequence belongs to the G-alpha family. As to quaternary structure, g proteins are composed of 3 units; alpha, beta and gamma. Binding of the beta-gamma subunit complex (git5-git11) to the alpha subunit (gpa2) facilitates interaction with GPCR git3. Interacts with GPCR git3; the interaction is direct and leads to activation of gpa2 upon glucose stimulation. Interacts with adenylate cyclase cyr1 (via N-terminus); the interaction is direct and serves to activate adenylate cyclase and cAMP-PKA signaling, to repress sexual development and gluconeogenesis. Mg(2+) is required as a cofactor.

It localises to the cell membrane. In terms of biological role, alpha subunit of the heterotrimeric guanine nucleotide-binding protein (G protein) involved in glucose-induced cAMP signaling. Binds to its cognate transmembrane receptor git3, which senses extracellular glucose, and activates cAMP-PKA signaling to repress sexual development and gluconeogenesis. In Schizosaccharomyces pombe (strain 972 / ATCC 24843) (Fission yeast), this protein is Guanine nucleotide-binding protein alpha-2 subunit.